A 238-amino-acid chain; its full sequence is Glutamine amidotransferase-like protein chyE (238 aa).

The Glutamine amidotransferase type-1 domain occupies 8–238 (KIAVLINTPP…LERVLQWLSE (231 aa)). The active-site Nucleophile is the Cys-102. Residues His-189 and Glu-191 contribute to the active site.

Belongs to the peptidase C26 family.

It functions in the pathway pigment biosynthesis. Its function is as follows. Glutamine amidotransferase-like protein; part of the gene cluster that mediates the biosynthesis of the yellow pigment chrysogine. the NRPS chyA mediates the condensation of anthranilic acid and alanine into the intermediate 2-(2-aminopropanamido)benzoic acid. The remainder of the pathway is highly branched yielding at least 13 chrysogine-related compounds. The malonyl transferase chyE converts 2-(2-aminopropanamido)benzoic acid and 2-(2-aminopropanamido)benzamidine into 2-(2-(2-carboxyacetamido)propanamido)benzoic acid and 3-((1-((2-carbamoylphenyl)amino)-1-oxopropan-2-yl)amino)-3-oxopropanoic acid, respectively. ChyD is an amidase, being responsible for the amidation of the carboxylic acid moiety of 2-(2-aminopropanamido)benzoic acid, 2-(2-(2-carboxyacetamido)propanamido)benzoic acid and 2-(2-((4-amino-1-carboxy-4-oxobutyl)amino)propanamido)benzoic acid. ChyC is involved in the same reactions as ChyD, but plays a more minor role in the amidation reactions compared to chyD. The oxidoreductases chyH and chyM are involved in oxidation reactions that form N-pyruvoylanthranilamide from 2-(2-aminopropanamido)benzamidine and (1-((2-carbamoylphenyl)amino)-1-oxopropan-2-yl)glutamine, respectively. N-pyruvoylanthranilamide is further converted via two further branches in the pathway, yielding chrysogine and additional chrysogine-related coumpounds. Chrysogine is likely formed by a spontaneous ring closure from N-pyruvoylanthranilamide. This is Glutamine amidotransferase-like protein chyE from Penicillium rubens (strain ATCC 28089 / DSM 1075 / NRRL 1951 / Wisconsin 54-1255) (Penicillium chrysogenum).